The chain runs to 340 residues: L-threonine 3-dehydrogenase (340 aa).

Residue Cys38 participates in Zn(2+) binding. Active-site charge relay system residues include Thr40 and His43. Zn(2+)-binding residues include His63, Glu64, Cys93, Cys96, Cys99, and Cys107. NAD(+) contacts are provided by residues Ile175, Asp195, Arg200, 261 to 263 (LGI), and 285 to 286 (IY).

The protein belongs to the zinc-containing alcohol dehydrogenase family. As to quaternary structure, homotetramer. Zn(2+) is required as a cofactor.

Its subcellular location is the cytoplasm. It catalyses the reaction L-threonine + NAD(+) = (2S)-2-amino-3-oxobutanoate + NADH + H(+). It participates in amino-acid degradation; L-threonine degradation via oxydo-reductase pathway; glycine from L-threonine: step 1/2. Its function is as follows. Catalyzes the NAD(+)-dependent oxidation of L-threonine to 2-amino-3-ketobutyrate. The sequence is that of L-threonine 3-dehydrogenase from Xanthomonas campestris pv. campestris (strain ATCC 33913 / DSM 3586 / NCPPB 528 / LMG 568 / P 25).